Reading from the N-terminus, the 193-residue chain is uncharacterized protein (193 aa).

This is an uncharacterized protein from Mycoplasma pneumoniae (strain ATCC 29342 / M129 / Subtype 1) (Mycoplasmoides pneumoniae).